A 240-amino-acid polypeptide reads, in one-letter code: 2,3-bisphosphoglycerate-dependent phosphoglycerate mutase (240 aa).

Residues 5 to 12 (RHGESVWN), 18 to 19 (TG), R57, 84 to 87 (ERHY), K95, 111 to 112 (RR), and 180 to 181 (GN) contribute to the substrate site. H6 (tele-phosphohistidine intermediate) is an active-site residue. The active-site Proton donor/acceptor is E84.

The protein belongs to the phosphoglycerate mutase family. BPG-dependent PGAM subfamily. In terms of assembly, homodimer.

The enzyme catalyses (2R)-2-phosphoglycerate = (2R)-3-phosphoglycerate. Its pathway is carbohydrate degradation; glycolysis; pyruvate from D-glyceraldehyde 3-phosphate: step 3/5. Its function is as follows. Catalyzes the interconversion of 2-phosphoglycerate and 3-phosphoglycerate. The sequence is that of 2,3-bisphosphoglycerate-dependent phosphoglycerate mutase from Nitrosococcus oceani (strain ATCC 19707 / BCRC 17464 / JCM 30415 / NCIMB 11848 / C-107).